The primary structure comprises 164 residues: R-phycoerythrin alpha chain (164 aa).

Residues cysteine 82 and cysteine 139 each contribute to the (2R,3E)-phycoerythrobilin site.

It belongs to the phycobiliprotein family. As to quaternary structure, heterodimer of an alpha and a beta chain. Contains two covalently linked bilin chromophores.

It localises to the plastid. It is found in the chloroplast thylakoid membrane. Light-harvesting photosynthetic bile pigment-protein from the phycobiliprotein complex. In Lophosiphonia boldii (Red alga), this protein is R-phycoerythrin alpha chain (cpeA).